Here is a 328-residue protein sequence, read N- to C-terminus: Transcription initiation factor IIB 4 (328 aa).

Composition is skewed to basic and acidic residues over residues 1 to 12 (MTNQRTTRDGSH) and 21 to 32 (RSRESTDEDHGC). A disordered region spans residues 1 to 47 (MTNQRTTRDGSHGTESVPTQRSRESTDEDHGCPECNGDLVTDEDRGE). The TFIIB-type zinc finger occupies 28–58 (EDHGCPECNGDLVTDEDRGETTCGECGLVVE). Zn(2+) is bound by residues Cys-32, Cys-35, Cys-50, and Cys-53. Tandem repeats lie at residues 144-227 (GEIE…AREL) and 238-319 (SYVP…EILD).

Belongs to the TFIIB family.

Functionally, stabilizes TBP binding to an archaeal box-A promoter. Also responsible for recruiting RNA polymerase II to the pre-initiation complex (DNA-TBP-TFIIB). The polypeptide is Transcription initiation factor IIB 4 (Halobacterium salinarum (strain ATCC 700922 / JCM 11081 / NRC-1) (Halobacterium halobium)).